A 79-amino-acid chain; its full sequence is DNA-directed RNA polymerase subunit omega (79 aa).

Belongs to the RNA polymerase subunit omega family. As to quaternary structure, the RNAP catalytic core consists of 2 alpha, 1 beta, 1 beta' and 1 omega subunit. When a sigma factor is associated with the core the holoenzyme is formed, which can initiate transcription.

The catalysed reaction is RNA(n) + a ribonucleoside 5'-triphosphate = RNA(n+1) + diphosphate. Functionally, promotes RNA polymerase assembly. Latches the N- and C-terminal regions of the beta' subunit thereby facilitating its interaction with the beta and alpha subunits. The protein is DNA-directed RNA polymerase subunit omega of Bdellovibrio bacteriovorus (strain ATCC 15356 / DSM 50701 / NCIMB 9529 / HD100).